Reading from the N-terminus, the 243-residue chain is SNDISFKFDKFDPNGKQLTFQGYASVLDTGVLQLNKVGTGLPKEIGGIARYVAPFQIWSKATGEVASFVTSFQFFLETSPNPANGASDGLTFFLAPPNSPLRRAGGYLGLFETSNKSDSSYQTVAVEFDTVGAPANTWDPGYPHIGVDVNRVTSIKTTKEKWNKRYKREVANVWITYQASSKTLTASLTYPQDQTSDSVSVDFKANLPEWVSVGFTGGTTVGGRETTHEILNWYFSSTLEYQT.

N-linked (GlcNAc...) asparagine glycosylation is present at Asn-115. 2 residues coordinate Mn(2+): Glu-127 and Asp-129. 3 residues coordinate Ca(2+): Asp-129, Asn-136, and Asp-139. Positions 139 and 144 each coordinate Mn(2+).

This sequence belongs to the leguminous lectin family. In terms of assembly, homodimer.

Lactose- or galactose-binding anti-H(O) lectin. In Cytisophyllum sessilifolium (Sessile-leaved cytisus), this protein is Anti-H(O) lectin 2.